A 259-amino-acid polypeptide reads, in one-letter code: MKGFYMYYLGIILASVVGYFLGSISWSIIIVKKVGNIDIRTIGSGNPGATNTVRALGKKWGLVVAFLDALKVIFTSIIAILLSLIPSSLFSQTSYFIPCIFALIGHCFPIYYKFKGGKAVSCFLGLLFVVNILYLIIFLIVWFISVAISRKVSVASIFSAFFVLIIMWIPYLNGVSYFIWQWNGLEQFSVAWKNYILFSLLNSFHYWFSNIWASGMLEGNIIVLIGGLILGLRHSQNIKRIKNKTEPDTFPRKKQAIKN.

7 helical membrane passes run 11-31 (IILA…IIIV), 62-82 (LVVA…AILL), 93-112 (TSYF…PIYY), 124-144 (LGLL…VWFI), 152-172 (VSVA…IPYL), 188-208 (FSVA…HYWF), and 211-231 (IWAS…LILG).

It belongs to the PlsY family. Probably interacts with PlsX.

Its subcellular location is the cell membrane. It carries out the reaction an acyl phosphate + sn-glycerol 3-phosphate = a 1-acyl-sn-glycero-3-phosphate + phosphate. It functions in the pathway lipid metabolism; phospholipid metabolism. Functionally, catalyzes the transfer of an acyl group from acyl-phosphate (acyl-PO(4)) to glycerol-3-phosphate (G3P) to form lysophosphatidic acid (LPA). This enzyme utilizes acyl-phosphate as fatty acyl donor, but not acyl-CoA or acyl-ACP. This Mycoplasma capricolum subsp. capricolum (strain California kid / ATCC 27343 / NCTC 10154) protein is Glycerol-3-phosphate acyltransferase.